A 369-amino-acid chain; its full sequence is tRNA/tmRNA (uracil-C(5))-methyltransferase (369 aa).

S-adenosyl-L-methionine contacts are provided by Q190, Y218, N223, E239, and D301. The active-site Nucleophile is the C326. E360 functions as the Proton acceptor in the catalytic mechanism.

The protein belongs to the class I-like SAM-binding methyltransferase superfamily. RNA M5U methyltransferase family. TrmA subfamily.

The catalysed reaction is uridine(54) in tRNA + S-adenosyl-L-methionine = 5-methyluridine(54) in tRNA + S-adenosyl-L-homocysteine + H(+). It carries out the reaction uridine(341) in tmRNA + S-adenosyl-L-methionine = 5-methyluridine(341) in tmRNA + S-adenosyl-L-homocysteine + H(+). Dual-specificity methyltransferase that catalyzes the formation of 5-methyluridine at position 54 (m5U54) in all tRNAs, and that of position 341 (m5U341) in tmRNA (transfer-mRNA). The polypeptide is tRNA/tmRNA (uracil-C(5))-methyltransferase (Vibrio parahaemolyticus serotype O3:K6 (strain RIMD 2210633)).